Consider the following 341-residue polypeptide: Ferrochelatase (341 aa).

Fe cation contacts are provided by His189 and Glu293.

It belongs to the ferrochelatase family.

The protein resides in the cytoplasm. It carries out the reaction heme b + 2 H(+) = protoporphyrin IX + Fe(2+). Its pathway is porphyrin-containing compound metabolism; protoheme biosynthesis; protoheme from protoporphyrin-IX: step 1/1. Catalyzes the ferrous insertion into protoporphyrin IX. The chain is Ferrochelatase from Stutzerimonas stutzeri (strain A1501) (Pseudomonas stutzeri).